Here is a 317-residue protein sequence, read N- to C-terminus: Chitin synthase export chaperone (317 aa).

The next 7 helical transmembrane spans lie at 63-83 (IFEI…IIII), 101-121 (FFQT…GVSA), 133-153 (VQLG…LLGF), 164-184 (MLLL…VSIV), 204-224 (FTVM…CLLI), 236-256 (TGAI…IYAF), and 266-286 (HYLD…MMLY).

It belongs to the CHS7 family. In terms of assembly, interacts with CHS3.

It localises to the endoplasmic reticulum membrane. Its function is as follows. Chaperone required for the export of the chitin synthase CHS3 from the endoplasmic reticulum. This chain is Chitin synthase export chaperone (CHS7), found in Kluyveromyces lactis (strain ATCC 8585 / CBS 2359 / DSM 70799 / NBRC 1267 / NRRL Y-1140 / WM37) (Yeast).